Consider the following 586-residue polypeptide: Phosphomethylpyrimidine synthase (586 aa).

Residues 1-33 are disordered; it reads MKQSVSAEQIELKSSLPGSKKVYVDGPREGMKV. Residues 22 to 33 are compositionally biased toward basic and acidic residues; the sequence is VYVDGPREGMKV. Substrate contacts are provided by residues Asn-193, Met-222, Tyr-251, His-287, 307–309, 348–351, and Glu-387; these read SRG and DGLR. His-391 lines the Zn(2+) pocket. Tyr-414 contributes to the substrate binding site. His-455 contributes to the Zn(2+) binding site. [4Fe-4S] cluster is bound by residues Cys-535, Cys-538, and Cys-543.

It belongs to the ThiC family. [4Fe-4S] cluster serves as cofactor.

It carries out the reaction 5-amino-1-(5-phospho-beta-D-ribosyl)imidazole + S-adenosyl-L-methionine = 4-amino-2-methyl-5-(phosphooxymethyl)pyrimidine + CO + 5'-deoxyadenosine + formate + L-methionine + 3 H(+). Its pathway is cofactor biosynthesis; thiamine diphosphate biosynthesis. Functionally, catalyzes the synthesis of the hydroxymethylpyrimidine phosphate (HMP-P) moiety of thiamine from aminoimidazole ribotide (AIR) in a radical S-adenosyl-L-methionine (SAM)-dependent reaction. The sequence is that of Phosphomethylpyrimidine synthase from Bacillus cereus (strain G9842).